Consider the following 72-residue polypeptide: UPF0270 protein ESA_04379 (72 aa).

It belongs to the UPF0270 family.

This is UPF0270 protein ESA_04379 from Cronobacter sakazakii (strain ATCC BAA-894) (Enterobacter sakazakii).